A 275-amino-acid polypeptide reads, in one-letter code: MSSRKKVRVLLLKNKTVPIDKYELECRSKAFEPIFVPLIKHTHVIQDFRNVLNTIPNYLNTINYIIITSQRTVESLNEAIIPTLTSEQKAALLSKTVYTVGPATANFIRRSGFINVKGGEDAGNGSILADIIIDDLSTDIKACPPSELLFLVGEIRRDIIPKKLHSKGIKVREVVTYKTEELSDGFKRFIHAMKECDEDEVFSDWVVVFSPQGTKEITQYLGDSNRLPGSHLRVASIGPTTKKYLDDNDVTSDVVSPKPDPKSLLDAIELYQRHK.

It belongs to the uroporphyrinogen-III synthase family.

The enzyme catalyses hydroxymethylbilane = uroporphyrinogen III + H2O. The protein operates within porphyrin-containing compound metabolism; protoporphyrin-IX biosynthesis; coproporphyrinogen-III from 5-aminolevulinate: step 3/4. In terms of biological role, catalyzes cyclization of the linear tetrapyrrole, hydroxymethylbilane, to the macrocyclic uroporphyrinogen III, the fourth step in the heme biosynthetic pathway. This chain is Uroporphyrinogen-III synthase, found in Saccharomyces cerevisiae (strain ATCC 204508 / S288c) (Baker's yeast).